The chain runs to 97 residues: Putative pterin-4-alpha-carbinolamine dehydratase (97 aa).

The protein belongs to the pterin-4-alpha-carbinolamine dehydratase family.

The enzyme catalyses (4aS,6R)-4a-hydroxy-L-erythro-5,6,7,8-tetrahydrobiopterin = (6R)-L-erythro-6,7-dihydrobiopterin + H2O. This is Putative pterin-4-alpha-carbinolamine dehydratase from Dinoroseobacter shibae (strain DSM 16493 / NCIMB 14021 / DFL 12).